Consider the following 423-residue polypeptide: Glutamate-1-semialdehyde 2,1-aminomutase (423 aa).

K266 bears the N6-(pyridoxal phosphate)lysine mark.

This sequence belongs to the class-III pyridoxal-phosphate-dependent aminotransferase family. HemL subfamily. In terms of assembly, homodimer. It depends on pyridoxal 5'-phosphate as a cofactor.

It localises to the cytoplasm. The enzyme catalyses (S)-4-amino-5-oxopentanoate = 5-aminolevulinate. Its pathway is porphyrin-containing compound metabolism; protoporphyrin-IX biosynthesis; 5-aminolevulinate from L-glutamyl-tRNA(Glu): step 2/2. This Desulfovibrio desulfuricans (strain ATCC 27774 / DSM 6949 / MB) protein is Glutamate-1-semialdehyde 2,1-aminomutase.